The following is a 1466-amino-acid chain: Collagen alpha-1(III) chain (1466 aa).

A signal peptide spans M1 to A23. The propeptide at Q24–P153 is N-terminal propeptide. Residues G30–P89 enclose the VWFC domain. Positions P95–G1194 are disordered. The segment covering P99–K108 has biased composition (low complexity). Over residues T146–Y155 the composition is skewed to polar residues. Residues Q149–G167 form a nonhelical region (N-terminal) region. Positions G168–C1196 are triple-helical region. 17 positions are modified to 4-hydroxyproline: P173, P179, P182, P185, P191, P194, P197, P203, P206, P215, P218, P236, P239, P245, P248, P257, and P260. Over residues P175 to P185 the composition is skewed to pro residues. A compositionally biased stretch (low complexity) spans T187–Y199. The span at K229 to E241 shows a compositional bias: basic and acidic residues. A compositionally biased stretch (low complexity) spans K251 to P260. The residue at position 263 (K263) is a 5-hydroxylysine; alternate. The O-linked (Gal...) hydroxylysine; alternate glycan is linked to K263. The segment covering R266–E277 has biased composition (basic and acidic residues). The residue at position 281 (P281) is a 4-hydroxyproline. Residue K284 is modified to 5-hydroxylysine. 81 positions are modified to 4-hydroxyproline: P290, P296, P305, P311, P314, P332, P335, P338, P344, P347, P359, P365, P371, P383, P386, P392, P404, P407, P416, P425, P434, P443, P455, P458, P470, P473, P479, P488, P500, P512, P524, P530, P533, P539, P542, P545, P551, P554, P563, P566, P575, P581, P590, P599, P602, P608, P620, P635, P644, P650, P656, P659, P661, P668, P671, P680, P686, P692, P701, P703, P713, P716, P722, P728, P737, P746, P749, P755, P770, P776, P785, P788, P797, P806, P812, P815, P821, P830, P839, P845, and P854. The span at P311–N322 shows a compositional bias: low complexity. The segment covering P355–Q380 has biased composition (low complexity). A compositionally biased stretch (gly residues) spans G390 to G399. Low complexity predominate over residues P404–P425. A compositionally biased stretch (gly residues) spans G426–G435. The span at L478–E523 shows a compositional bias: low complexity. Residues G528–G549 are compositionally biased toward gly residues. Residues G642–G651 are compositionally biased toward gly residues. Residues G669–G678 show a composition bias toward gly residues. The span at A679 to P692 shows a compositional bias: low complexity. Residues G693–G711 are compositionally biased toward gly residues. Gly residues predominate over residues G729 to G738. Low complexity predominate over residues L787 to S796. The segment covering G823–E835 has biased composition (basic and acidic residues). The segment covering G836 to P850 has biased composition (gly residues). At K860 the chain carries 5-hydroxylysine. Residues G864 to G873 are compositionally biased toward gly residues. 4-hydroxyproline is present on residues P866, P869, P875, P881, P884, P890, P892, P899, P905, P914, P917, P929, P935, P941, and P944. Residues P890 to P907 show a composition bias toward pro residues. Residues A908–P917 are compositionally biased toward low complexity. Residues P946–P961 show a composition bias toward low complexity. Residues P962, P965, and P971 each carry the 4-hydroxyproline modification. 5-hydroxylysine is present on K977. P983, P995, P1001, P1010, P1016, P1022, P1028, P1040, P1043, P1046, P1049, P1052, P1076, and P1085 each carry 4-hydroxyproline. Positions P1046–V1055 are enriched in pro residues. The segment covering S1067–P1085 has biased composition (low complexity). At K1106 the chain carries 5-hydroxylysine. P1112, P1115, P1118, P1121, P1133, P1148, P1157, P1163, P1178, P1181, P1184, P1187, P1190, and P1193 each carry 4-hydroxyproline. Positions P1123–P1133 are enriched in low complexity. Residues P1181–P1193 are compositionally biased toward pro residues. Residues C1197–I1205 are nonhelical region (C-terminal). A propeptide spans D1222–L1466 (C-terminal propeptide). In terms of domain architecture, Fibrillar collagen NC1 spans D1232–L1466. Cystine bridges form between C1262–C1294, C1302–C1464, and C1372–C1417. The Ca(2+) site is built by D1280, N1282, Q1283, C1285, and D1288.

Belongs to the fibrillar collagen family. In terms of assembly, trimers of identical alpha 1(III) chains. The chains are linked to each other by interchain disulfide bonds. Trimers are also cross-linked via hydroxylysines. Interacts with ADGRG1. In terms of processing, proline residues at the third position of the tripeptide repeating unit (G-X-Y) are hydroxylated in some or all of the chains. O-linked glycan consists of a Glc-Gal disaccharide bound to the oxygen atom of a post-translationally added hydroxyl group.

Its subcellular location is the secreted. It localises to the extracellular space. It is found in the extracellular matrix. Its function is as follows. Collagen type III occurs in most soft connective tissues along with type I collagen. Involved in regulation of cortical development. Is the major ligand of ADGRG1 in the developing brain and binding to ADGRG1 inhibits neuronal migration and activates the RhoA pathway by coupling ADGRG1 to GNA13 and possibly GNA12. This chain is Collagen alpha-1(III) chain (COL3A1), found in Homo sapiens (Human).